The following is a 143-amino-acid chain: Hemoglobin subunit alpha (143 aa).

An N-acetylserine modification is found at Ser2. Positions 2-143 (SLSDKDKAAV…VALALAEKYR (142 aa)) constitute a Globin domain. Position 60 (His60) interacts with O2. His89 contributes to the heme b binding site.

Belongs to the globin family. In terms of assembly, heterotetramer of two alpha chains and two beta chains. As to expression, red blood cells.

In terms of biological role, involved in oxygen transport from the lung to the various peripheral tissues. This Artedidraco orianae (Barbeled plunderfish) protein is Hemoglobin subunit alpha (hba).